We begin with the raw amino-acid sequence, 1178 residues long: Pyruvate carboxylase, mitochondrial (1178 aa).

The transit peptide at Met-1–Ser-20 directs the protein to the mitochondrion. Ser-21 bears the Phosphoserine mark. Lys-35 and Lys-39 each carry N6-acetyllysine. Positions Pro-36–Glu-486 constitute a Biotin carboxylation domain. An N6-acetyllysine; alternate modification is found at Lys-79. N6-succinyllysine; alternate is present on Lys-79. An N6-acetyllysine mark is found at Lys-148 and Lys-152. ATP is bound by residues Lys-152 and Glu-236. An ATP-grasp domain is found at Arg-156–Glu-353. Lys-241 bears the N6-acetyllysine mark. An ATP-binding site is contributed by His-271. Residues Lys-297, Lys-316, and Lys-319 each carry the N6-acetyllysine modification. Arg-328 is an active-site residue. At Lys-434 the chain carries N6-acetyllysine. The residue at position 442 (Lys-442) is an N6-succinyllysine. Positions Leu-563–Phe-832 constitute a Pyruvate carboxyltransferase domain. Residue Arg-571–Gln-575 participates in substrate binding. Asp-572 provides a ligand contact to Mn(2+). Lys-589 carries the N6-acetyllysine modification. Substrate is bound at residue Arg-644. An N6-acetyllysine mark is found at Lys-661 and Lys-717. Lys-741 lines the Mn(2+) pocket. Position 741 is an N6-carboxylysine (Lys-741). Lys-748 carries the N6-acetyllysine modification. 2 residues coordinate Mn(2+): His-771 and His-773. N6-acetyllysine is present on Lys-892. Thr-908 contributes to the substrate binding site. Residue Lys-969 is modified to N6-acetyllysine. Lys-988 carries the N6-acetyllysine; alternate modification. At Lys-988 the chain carries N6-succinyllysine; alternate. At Lys-992 the chain carries N6-acetyllysine. The residue at position 1003 (Thr-1003) is a Phosphothreonine. 3 positions are modified to N6-acetyllysine: Lys-1061, Lys-1090, and Lys-1124. One can recognise a Biotinyl-binding domain in the interval Lys-1109–Glu-1178. Position 1144 is an N6-biotinyllysine (Lys-1144).

Homotetramer. Interacts (via the biotin carboxylation domain) with SIRT4. Biotin serves as cofactor. Mn(2+) is required as a cofactor. Acetylation of Lys-316 is observed in liver mitochondria from fasted mice but not from fed mice. Acetylation of Lys-748 might play a role in catalytic activity regulation. Liver, kidney, adipose tissue, liver and brain.

It is found in the mitochondrion matrix. It carries out the reaction hydrogencarbonate + pyruvate + ATP = oxaloacetate + ADP + phosphate + H(+). The protein operates within carbohydrate biosynthesis; gluconeogenesis. In terms of biological role, pyruvate carboxylase catalyzes a 2-step reaction, involving the ATP-dependent carboxylation of the covalently attached biotin in the first step and the transfer of the carboxyl group to pyruvate in the second. Catalyzes in a tissue specific manner, the initial reactions of glucose (liver, kidney) and lipid (adipose tissue, liver, brain) synthesis from pyruvate. In Mus musculus (Mouse), this protein is Pyruvate carboxylase, mitochondrial (Pc).